The following is a 125-amino-acid chain: Holo-[acyl-carrier-protein] synthase (125 aa).

Residues aspartate 8 and glutamate 57 each contribute to the Mg(2+) site.

The protein belongs to the P-Pant transferase superfamily. AcpS family. Mg(2+) serves as cofactor.

The protein resides in the cytoplasm. It carries out the reaction apo-[ACP] + CoA = holo-[ACP] + adenosine 3',5'-bisphosphate + H(+). Its function is as follows. Transfers the 4'-phosphopantetheine moiety from coenzyme A to a Ser of acyl-carrier-protein. This Geobacter sp. (strain M21) protein is Holo-[acyl-carrier-protein] synthase.